Reading from the N-terminus, the 305-residue chain is Flavin-dependent thymidylate synthase (305 aa).

The region spanning 50–261 (GFVRLIDYLG…PCATASFENH (212 aa)) is the ThyX domain. Residues serine 96, 119 to 121 (RHR), and glutamate 127 contribute to the FAD site. Residues 116-119 (QWMR), 127-131 (EVSSR), and arginine 200 each bind dUMP. Positions 119-129 (RHRTARISEVS) match the ThyX motif motif. FAD is bound by residues 216–218 (DLH) and histidine 222. Arginine 227 lines the dUMP pocket. Arginine 227 acts as the Involved in ionization of N3 of dUMP, leading to its activation in catalysis.

This sequence belongs to the thymidylate synthase ThyX family. Homotetramer. It depends on FAD as a cofactor.

It carries out the reaction dUMP + (6R)-5,10-methylene-5,6,7,8-tetrahydrofolate + NADPH + H(+) = dTMP + (6S)-5,6,7,8-tetrahydrofolate + NADP(+). Its pathway is pyrimidine metabolism; dTTP biosynthesis. Its function is as follows. Catalyzes the reductive methylation of 2'-deoxyuridine-5'-monophosphate (dUMP) to 2'-deoxythymidine-5'-monophosphate (dTMP) while utilizing 5,10-methylenetetrahydrofolate (mTHF) as the methyl donor, and NADPH and FADH(2) as the reductant. In Treponema pallidum (strain Nichols), this protein is Flavin-dependent thymidylate synthase.